The primary structure comprises 92 residues: YcgL domain-containing protein HS_0805 (92 aa).

In terms of domain architecture, YcgL spans 1–85 (MLCAIYKTKR…QQENLLEQER (85 aa)).

This is YcgL domain-containing protein HS_0805 from Histophilus somni (strain 129Pt) (Haemophilus somnus).